Consider the following 228-residue polypeptide: Ribonuclease HII (228 aa).

Positions 11 to 202 constitute an RNase H type-2 domain; sequence GPVAGVDEAG…VVAAAQLHGM (192 aa). A divalent metal cation contacts are provided by Asp17, Glu18, and Asp111.

The protein belongs to the RNase HII family. It depends on Mn(2+) as a cofactor. Requires Mg(2+) as cofactor.

The protein resides in the cytoplasm. The enzyme catalyses Endonucleolytic cleavage to 5'-phosphomonoester.. In terms of biological role, endonuclease that specifically degrades the RNA of RNA-DNA hybrids. The protein is Ribonuclease HII of Saccharopolyspora erythraea (strain ATCC 11635 / DSM 40517 / JCM 4748 / NBRC 13426 / NCIMB 8594 / NRRL 2338).